We begin with the raw amino-acid sequence, 704 residues long: Phosphate acetyltransferase (704 aa).

The tract at residues 380–704 (FNLIEKAKRN…IQAQAEKGLI (325 aa)) is phosphate acetyltransferase.

The protein in the N-terminal section; belongs to the CobB/CobQ family. In the C-terminal section; belongs to the phosphate acetyltransferase and butyryltransferase family. Homohexamer.

It localises to the cytoplasm. It carries out the reaction acetyl-CoA + phosphate = acetyl phosphate + CoA. It functions in the pathway metabolic intermediate biosynthesis; acetyl-CoA biosynthesis; acetyl-CoA from acetate: step 2/2. In terms of biological role, involved in acetate metabolism. In Nitratidesulfovibrio vulgaris (strain ATCC 29579 / DSM 644 / CCUG 34227 / NCIMB 8303 / VKM B-1760 / Hildenborough) (Desulfovibrio vulgaris), this protein is Phosphate acetyltransferase (pta).